The chain runs to 170 residues: Adenine phosphoribosyltransferase (170 aa).

The protein belongs to the purine/pyrimidine phosphoribosyltransferase family. As to quaternary structure, homodimer.

The protein localises to the cytoplasm. It carries out the reaction AMP + diphosphate = 5-phospho-alpha-D-ribose 1-diphosphate + adenine. Its pathway is purine metabolism; AMP biosynthesis via salvage pathway; AMP from adenine: step 1/1. Catalyzes a salvage reaction resulting in the formation of AMP, that is energically less costly than de novo synthesis. The protein is Adenine phosphoribosyltransferase of Bacillus licheniformis (strain ATCC 14580 / DSM 13 / JCM 2505 / CCUG 7422 / NBRC 12200 / NCIMB 9375 / NCTC 10341 / NRRL NRS-1264 / Gibson 46).